Reading from the N-terminus, the 608-residue chain is Glutamyl-tRNA(Gln) amidotransferase subunit E (608 aa).

Positions 401–428 (PEETRAANPDGTTRFLRPRPGAARMYPE) are disordered.

Belongs to the GatB/GatE family. GatE subfamily. In terms of assembly, heterodimer of GatD and GatE.

The catalysed reaction is L-glutamyl-tRNA(Gln) + L-glutamine + ATP + H2O = L-glutaminyl-tRNA(Gln) + L-glutamate + ADP + phosphate + H(+). Allows the formation of correctly charged Gln-tRNA(Gln) through the transamidation of misacylated Glu-tRNA(Gln) in organisms which lack glutaminyl-tRNA synthetase. The reaction takes place in the presence of glutamine and ATP through an activated gamma-phospho-Glu-tRNA(Gln). The GatDE system is specific for glutamate and does not act on aspartate. This chain is Glutamyl-tRNA(Gln) amidotransferase subunit E, found in Pyrobaculum arsenaticum (strain DSM 13514 / JCM 11321 / PZ6).